Consider the following 176-residue polypeptide: Japanin (176 aa).

Residues 1 to 24 (MKVLRCLVCSFYIIVSLITTMTIG) form the signal peptide. Glu47 contacts cholesterol. 2 cysteine pairs are disulfide-bonded: Cys52–Cys174 and Cys138–Cys162. N-linked (GlcNAc...) asparagine glycosylation is found at Asn59 and Asn155.

Belongs to the calycin superfamily. Lipocalin family. Homodimer; non-disulfide-linked. Each monomer accommodates one molecule of cholesterol in a pocket. In terms of tissue distribution, expressed in salivary glands.

It localises to the secreted. Salivary tick protein that modulates host immune response. This protein blocks dendritic cell (DC) differentiation from monocytes. In addition, it inhibits up-regulation of costimulatory molecules and pro-inflammatory cytokines in response to stimuli and promotes up-regulation of co-inhibitory molecules and the anti-inflammatory cytokine interleukin-10. It has a pocket to accomodate cholesterol, which may have immune-modulatory roles, either directly or through interactions with the host gut microbiota. In Rhipicephalus appendiculatus (Brown ear tick), this protein is Japanin.